Consider the following 228-residue polypeptide: Phosphoribosylformylglycinamidine synthase subunit PurQ (228 aa).

One can recognise a Glutamine amidotransferase type-1 domain in the interval 2 to 228; sequence TVVVVQFGGS…DGKGILQAFG (227 aa). Cysteine 88 acts as the Nucleophile in catalysis. Residues histidine 205 and glutamate 207 contribute to the active site.

As to quaternary structure, part of the FGAM synthase complex composed of 1 PurL, 1 PurQ and 2 PurS subunits.

It localises to the cytoplasm. It catalyses the reaction N(2)-formyl-N(1)-(5-phospho-beta-D-ribosyl)glycinamide + L-glutamine + ATP + H2O = 2-formamido-N(1)-(5-O-phospho-beta-D-ribosyl)acetamidine + L-glutamate + ADP + phosphate + H(+). The enzyme catalyses L-glutamine + H2O = L-glutamate + NH4(+). The protein operates within purine metabolism; IMP biosynthesis via de novo pathway; 5-amino-1-(5-phospho-D-ribosyl)imidazole from N(2)-formyl-N(1)-(5-phospho-D-ribosyl)glycinamide: step 1/2. Its function is as follows. Part of the phosphoribosylformylglycinamidine synthase complex involved in the purines biosynthetic pathway. Catalyzes the ATP-dependent conversion of formylglycinamide ribonucleotide (FGAR) and glutamine to yield formylglycinamidine ribonucleotide (FGAM) and glutamate. The FGAM synthase complex is composed of three subunits. PurQ produces an ammonia molecule by converting glutamine to glutamate. PurL transfers the ammonia molecule to FGAR to form FGAM in an ATP-dependent manner. PurS interacts with PurQ and PurL and is thought to assist in the transfer of the ammonia molecule from PurQ to PurL. This Haloquadratum walsbyi (strain DSM 16790 / HBSQ001) protein is Phosphoribosylformylglycinamidine synthase subunit PurQ.